The sequence spans 269 residues: MTNRYTTLFANLEKRNEGAFIPFVTIGDPNKALSFEIIDTLVSSGADALELGIPFSDHLADGPTIQEANIRALESGITPKDCFDILTKIRAKYPHIPIGLLLYANLVYANGIENFYQKCLDAGVDSILIADVPAHESKEFRDIAKKVGIAQIFIAPPDASESTLKQISKLGSGYTYLLSRVGVTGTETAANMPVEDVLAKLREYNAPKPVLGFGISKPEQVQQAIKAGAAGAISGSATVKIIQNNISNKQKMLNELTYFVKEMKAATLN.

Catalysis depends on proton acceptor residues E50 and D61.

The protein belongs to the TrpA family. Tetramer of two alpha and two beta chains.

The enzyme catalyses (1S,2R)-1-C-(indol-3-yl)glycerol 3-phosphate + L-serine = D-glyceraldehyde 3-phosphate + L-tryptophan + H2O. The protein operates within amino-acid biosynthesis; L-tryptophan biosynthesis; L-tryptophan from chorismate: step 5/5. Functionally, the alpha subunit is responsible for the aldol cleavage of indoleglycerol phosphate to indole and glyceraldehyde 3-phosphate. In Francisella tularensis subsp. holarctica (strain FTNF002-00 / FTA), this protein is Tryptophan synthase alpha chain.